Reading from the N-terminus, the 160-residue chain is Phosphopantetheine adenylyltransferase (160 aa).

It belongs to the eukaryotic CoaD family.

Its subcellular location is the cytoplasm. It catalyses the reaction (R)-4'-phosphopantetheine + ATP + H(+) = 3'-dephospho-CoA + diphosphate. It participates in cofactor biosynthesis; coenzyme A biosynthesis. Reversibly transfers an adenylyl group from ATP to 4'-phosphopantetheine, yielding dephospho-CoA (dPCoA) and pyrophosphate. In Pyrococcus furiosus (strain ATCC 43587 / DSM 3638 / JCM 8422 / Vc1), this protein is Phosphopantetheine adenylyltransferase.